The primary structure comprises 293 residues: MTSQKATLIGLVAIVLWSTMVGLIRGVSEGLGPVGGAAMIYSLSGLLLIFTVGLPDIRRFPGRYLIAGSVLFVSYEICLALSLGYAATRHQAIEVGMVNYLWPSLTILFAILFNGQKTNWLIVPGLLIALTGVCWVLGGENGLNPGEIISNVATSPLSYLLAFLGAFIWATYCTVTNKYARGFNGITVFVLLTAVALWLHYFLTPQPAMIFSLPVIAKLFTAALTLGFAYAAWNVGILHGNVTIMAVGSYFTPVMSSALAALLLSSPLSFSFWQGAVMVCVGSLLCWLATRRR.

The Cytoplasmic segment spans residues Met-1–Ala-6. Residues Thr-7–Val-27 traverse the membrane as a helical segment. The 123-residue stretch at Val-15–Leu-137 folds into the EamA 1 domain. The Periplasmic segment spans residues Ser-28–Pro-33. A helical transmembrane segment spans residues Val-34–Leu-54. Residues Pro-55–Arg-63 are Cytoplasmic-facing. A helical membrane pass occupies residues Tyr-64–Gly-84. The Periplasmic segment spans residues Tyr-85–Ala-92. A helical transmembrane segment spans residues Ile-93–Phe-113. The Cytoplasmic segment spans residues Asn-114 to Asn-119. The chain crosses the membrane as a helical span at residues Trp-120–Glu-140. At Asn-141–Glu-147 the chain is on the periplasmic side. The helical transmembrane segment at Ile-148–Ile-168 threads the bilayer. The region spanning Phe-167–Leu-285 is the EamA 2 domain. The Cytoplasmic segment spans residues Trp-169–Gly-182. Residues Phe-183–Leu-203 form a helical membrane-spanning segment. Residues Thr-204 to Pro-207 are Periplasmic-facing. A helical membrane pass occupies residues Ala-208–Phe-228. Residues Ala-229–Thr-243 lie on the Cytoplasmic side of the membrane. Residues Ile-244 to Leu-264 traverse the membrane as a helical segment. Topologically, residues Ser-265–Pro-267 are periplasmic. The chain crosses the membrane as a helical span at residues Leu-268 to Leu-288. Residues Ala-289–Arg-293 are Cytoplasmic-facing.

The protein belongs to the drug/metabolite transporter (DMT) superfamily. Aromatic amino acid/paraquat exporter (ArAA/P-E) (TC 2.A.7.17) family.

The protein localises to the cell inner membrane. Amino acid transporter with broad substrate specificity. Required for resistance to methyl viologen. May function with OmpD porin. The protein is Aromatic amino acid exporter YddG (yddG) of Salmonella typhimurium (strain 14028s / SGSC 2262).